The primary structure comprises 680 residues: Leucine-rich repeat and calponin homology domain-containing protein 4 (680 aa).

The segment covering 1 to 22 (MAAAVAGPLAAGGEEAAASVSL) has biased composition (low complexity). Residues 1–35 (MAAAVAGPLAAGGEEAAASVSLPGSPGLPGSRSAE) form a disordered region. LRR repeat units follow at residues 41-64 (AVAT…AARS), 67-90 (LSDI…ACQL), 92-113 (SLEG…LGNL), 114-136 (TALT…ICQL), 138-158 (LRVL…ISTL), 159-181 (GSLR…LCSL), 182-204 (RSLR…LGDL), 206-226 (LVRL…FCRL), and 227-250 (RHLQ…CLKG). A phosphoserine mark is found at Ser-279, Ser-281, Ser-304, Ser-307, Ser-309, and Ser-313. Residues 329–528 (SELARDPRGP…PSSPESVLRP (200 aa)) form a disordered region. A compositionally biased stretch (basic and acidic residues) spans 330 to 345 (ELARDPRGPRQPREDG). The span at 346 to 355 (AGDGDLEQID) shows a compositional bias: acidic residues. Basic and acidic residues-rich tracts occupy residues 357–371 (IDSH…RSAA) and 385–418 (DVEK…ERKQ). At Ser-432 the chain carries Phosphoserine. Low complexity-rich tracts occupy residues 440-453 (AAGA…TQAT) and 510-528 (RSSS…VLRP). Residues Ser-511, Ser-513, Ser-517, Ser-521, and Ser-586 each carry the phosphoserine modification. Positions 531–644 (FPQEKELISQ…VLEAVILVGG (114 aa)) constitute a Calponin-homology (CH) domain. A helical transmembrane segment spans residues 655-675 (GLGGFLLFYVVFMLLLYVVYT).

In terms of tissue distribution, widely expressed across tissues, with the most abundant expression in spleen, testes, thymus, intestine, and blood. Expressed in macrophages.

It is found in the cell membrane. Functionally, accessory protein that regulates signaling by multiple TLRs, acting as a broad-spanning regulator of the innate immune response. In macrophages, binds LPS and promotes proper docking of LPS in lipid raft membrane. May be required for lipid raft maintenance. The chain is Leucine-rich repeat and calponin homology domain-containing protein 4 (Lrch4) from Mus musculus (Mouse).